The primary structure comprises 262 residues: tRNA U34 carboxymethyltransferase (262 aa).

Residues Lys-25, Trp-39, Lys-44, Gly-63, 114 to 115, Tyr-135, and Arg-250 each bind carboxy-S-adenosyl-L-methionine; that span reads VE.

The protein belongs to the class I-like SAM-binding methyltransferase superfamily. CmoB family. In terms of assembly, homotetramer.

It carries out the reaction carboxy-S-adenosyl-L-methionine + 5-hydroxyuridine(34) in tRNA = 5-carboxymethoxyuridine(34) in tRNA + S-adenosyl-L-homocysteine + H(+). Catalyzes carboxymethyl transfer from carboxy-S-adenosyl-L-methionine (Cx-SAM) to 5-hydroxyuridine (ho5U) to form 5-carboxymethoxyuridine (cmo5U) at position 34 in tRNAs. The sequence is that of tRNA U34 carboxymethyltransferase from Helicobacter acinonychis (strain Sheeba).